We begin with the raw amino-acid sequence, 1083 residues long: Centrosomal protein of 131 kDa (1083 aa).

Disordered regions lie at residues M1 to R155 and G220 to E258. The segment at M1 to L250 is interaction with PLK4. A phosphoserine mark is found at S14 and S35. Position 47 is a phosphoserine; by MAPKAPK2 (S47). Over residues Q68–S87 the composition is skewed to polar residues. S78 is modified (phosphoserine; by MAPKAPK2 and PLK4). Phosphoserine is present on residues S89, S105, S114, S146, and S150. Over residues L138–L148 the composition is skewed to polar residues. Positions N232–G245 are enriched in polar residues. The region spanning N269–G289 is the IQ domain. Residues R301 to Q429 are disordered. Basic and acidic residues-rich tracts occupy residues H317–R333 and G360–R369. Residue S381 is modified to Phosphoserine. Position 383 is a phosphothreonine (T383). Phosphoserine is present on residues S453, S489, D496, S499, S731, and S798. Positions K1047–R1076 are enriched in basic and acidic residues. The segment at K1047–K1083 is disordered.

It belongs to the CEP131 family. In terms of assembly, self-associates. Associates with the centriolar satellite BBSome protein complex. Interacts with BBS4; the interaction limits BBS4 availability for association with the BBSome complex, and hence negatively regulates ciliary localization of the BBSome complex. Interacts with MIB1. Interacts with PCM1; the interaction increases in response to ultraviolet light (UV) radiation. Associates with microtubules; association with microtubules is reduced in response to cellular stress, such as UV stimulation, in a process that requires p38 MAP kinase signaling. Interacts with CEP290, DCTN1, PCNT, PCM1 and CEP152. Interacts with 14-3-3 proteins following UV-induced phosphorylation by MAPKAPK2; this inhibits formation of novel centriolar satellites. Interacts with SDCCAG8. Interacts with CCDC61. Interacts with PLK4. Post-translationally, ubiquitinated. Undergoes monoubiquitination catalyzed by the E3 ubiquitin-protein ligase MIB1 in proliferating cells, preventing cilia formation. Monoubiquitination by MIB1 is inhibited in response to cellular stress, such as ultraviolet light (UV) radiation or heat shock, resulting in cilia formation initiation. In terms of processing, MAPKAPK2-dependent phosphorylation at Ser-47 and Ser-78 occurs in response to cellular stress such as exposure to ultraviolet irradiation and promotes binding to 14-3-3 proteins which leads to cytoplasmic sequestration of CEP131 and blocks formation of new centriolar satellites. Phosphorylation at Ser-78 mediated by PLK4 is essential for proper organization and integrity of centriolar satellites but is dispensable for its localization to centrioles and its function in ciliogenesis.

The protein localises to the cytoplasm. It is found in the cytoskeleton. The protein resides in the microtubule organizing center. Its subcellular location is the centrosome. It localises to the centriolar satellite. The protein localises to the centriole. It is found in the cilium basal body. The protein resides in the cytoplasmic vesicle. Its subcellular location is the secretory vesicle. It localises to the acrosome. Functionally, component of centriolar satellites contributing to the building of a complex and dynamic network required to regulate cilia/flagellum formation. In proliferating cells, MIB1-mediated ubiquitination induces its sequestration within centriolar satellites, precluding untimely cilia formation initiation. In contrast, during normal and ultraviolet or heat shock cellular stress-induced ciliogenesis, its non-ubiquitinated form is rapidly displaced from centriolar satellites and recruited to centrosome/basal bodies in a microtubule- and p38 MAPK-dependent manner. Also acts as a negative regulator of BBSome ciliary trafficking. Plays a role in sperm flagellar formation; may be involved in the regulation of intraflagellar transport (IFT) and/or intramanchette (IMT) trafficking, which are important for axoneme extension and/or cargo delivery to the nascent sperm tail. Required for optimal cell proliferation and cell cycle progression; may play a role in the regulation of genome stability in non-ciliogenic cells. Involved in centriole duplication. Required for CEP152, WDR62 and CEP63 centrosomal localization and promotes the centrosomal localization of CDK2. Essential for maintaining proper centriolar satellite integrity. In Homo sapiens (Human), this protein is Centrosomal protein of 131 kDa (CEP131).